Consider the following 107-residue polypeptide: Integration host factor subunit beta (107 aa).

Basic and acidic residues predominate over residues 82–101; sequence PGKELRERVDRRAGEPLKAE. Residues 82-107 are disordered; sequence PGKELRERVDRRAGEPLKAEEPDDDL.

Belongs to the bacterial histone-like protein family. In terms of assembly, heterodimer of an alpha and a beta chain.

Functionally, this protein is one of the two subunits of integration host factor, a specific DNA-binding protein that functions in genetic recombination as well as in transcriptional and translational control. In Paraburkholderia phytofirmans (strain DSM 17436 / LMG 22146 / PsJN) (Burkholderia phytofirmans), this protein is Integration host factor subunit beta.